The sequence spans 253 residues: Putative B3 domain-containing protein Os03g0619850 (253 aa).

The TF-B3 DNA-binding region spans 26-119 (MSCFLIRMTT…CFEVMILDSD (94 aa)). Disordered regions lie at residues 126–150 (LKSN…AGPP) and 230–253 (HRDA…EQDS). Positions 230-239 (HRDADQERQM) are enriched in basic and acidic residues.

The protein localises to the nucleus. This chain is Putative B3 domain-containing protein Os03g0619850, found in Oryza sativa subsp. japonica (Rice).